The chain runs to 432 residues: Thiol-specific monooxygenase (432 aa).

FAD contacts are provided by residues 13–17 (GGGPG) and 46–47 (VW). 65–66 (TN) serves as a coordination point for NADP(+). 117–118 (EV) contributes to the FAD binding site. 199–202 (SGQD) provides a ligand contact to NADP(+).

It belongs to the FMO family. As to quaternary structure, monomer. Requires FAD as cofactor.

Functionally, flavin-dependent oxidation of thiol-containing compounds. Probably required for the correct folding of disulfide-bonded proteins. This is Thiol-specific monooxygenase (FMO1) from Saccharomyces cerevisiae (strain ATCC 204508 / S288c) (Baker's yeast).